We begin with the raw amino-acid sequence, 407 residues long: S-adenosylmethionine synthase (407 aa).

H19 lines the ATP pocket. D21 serves as a coordination point for Mg(2+). E47 contributes to the K(+) binding site. Residues E60 and Q103 each coordinate L-methionine. Positions 103–113 (QSQEIADGVDT) are flexible loop. Residues 108–131 (ADGVDTSQEARGDGHFEEDDRAGA) form a disordered region. Residues 178–180 (DGK), D258, 264–265 (RK), A281, and K285 contribute to the ATP site. Residue D258 participates in L-methionine binding. An L-methionine-binding site is contributed by K289.

This sequence belongs to the AdoMet synthase family. As to quaternary structure, homotetramer; dimer of dimers. Mg(2+) serves as cofactor. It depends on K(+) as a cofactor.

The protein localises to the cytoplasm. It catalyses the reaction L-methionine + ATP + H2O = S-adenosyl-L-methionine + phosphate + diphosphate. Its pathway is amino-acid biosynthesis; S-adenosyl-L-methionine biosynthesis; S-adenosyl-L-methionine from L-methionine: step 1/1. In terms of biological role, catalyzes the formation of S-adenosylmethionine (AdoMet) from methionine and ATP. The overall synthetic reaction is composed of two sequential steps, AdoMet formation and the subsequent tripolyphosphate hydrolysis which occurs prior to release of AdoMet from the enzyme. In Corynebacterium efficiens (strain DSM 44549 / YS-314 / AJ 12310 / JCM 11189 / NBRC 100395), this protein is S-adenosylmethionine synthase.